The chain runs to 249 residues: 2,3-bisphosphoglycerate-dependent phosphoglycerate mutase (249 aa).

Residues 8 to 15 (RHGESAWN), 21 to 22 (TG), Arg-60, 87 to 90 (ERHY), Lys-98, 114 to 115 (RR), and 183 to 184 (GN) each bind substrate. The active-site Tele-phosphohistidine intermediate is the His-9. Residue Glu-87 is the Proton donor/acceptor of the active site.

Belongs to the phosphoglycerate mutase family. BPG-dependent PGAM subfamily.

It catalyses the reaction (2R)-2-phosphoglycerate = (2R)-3-phosphoglycerate. The protein operates within carbohydrate degradation; glycolysis; pyruvate from D-glyceraldehyde 3-phosphate: step 3/5. Its function is as follows. Catalyzes the interconversion of 2-phosphoglycerate and 3-phosphoglycerate. This is 2,3-bisphosphoglycerate-dependent phosphoglycerate mutase from Methanosphaerula palustris (strain ATCC BAA-1556 / DSM 19958 / E1-9c).